Consider the following 480-residue polypeptide: Chromosomal replication initiator protein DnaA (480 aa).

Residues 1–71 (MNLTKVWNTT…REQLGSVVGF (71 aa)) are domain I, interacts with DnaA modulators. Positions 71–139 (FPVDVRIVLA…LELHRAVRSS (69 aa)) are domain II. The interval 91-115 (SINGRHAARDTRKSDHHAPLSGGYG) is disordered. The span at 97-108 (AARDTRKSDHHA) shows a compositional bias: basic and acidic residues. The segment at 140–356 (MLNPRYTFDR…GCLNRVTAYA (217 aa)) is domain III, AAA+ region. ATP-binding residues include glycine 184, glycine 186, lysine 187, and threonine 188. Residues 357-480 (QMYNIPVTIE…IRERLMNSAV (124 aa)) are domain IV, binds dsDNA.

It belongs to the DnaA family. Oligomerizes as a right-handed, spiral filament on DNA at oriC.

Its subcellular location is the cytoplasm. Functionally, plays an essential role in the initiation and regulation of chromosomal replication. ATP-DnaA binds to the origin of replication (oriC) to initiate formation of the DNA replication initiation complex once per cell cycle. Binds the DnaA box (a 9 base pair repeat at the origin) and separates the double-stranded (ds)DNA. Forms a right-handed helical filament on oriC DNA; dsDNA binds to the exterior of the filament while single-stranded (ss)DNA is stabiized in the filament's interior. The ATP-DnaA-oriC complex binds and stabilizes one strand of the AT-rich DNA unwinding element (DUE), permitting loading of DNA polymerase. After initiation quickly degrades to an ADP-DnaA complex that is not apt for DNA replication. Binds acidic phospholipids. This Roseiflexus castenholzii (strain DSM 13941 / HLO8) protein is Chromosomal replication initiator protein DnaA.